Here is a 336-residue protein sequence, read N- to C-terminus: HTH-type transcriptional regulator RafR (336 aa).

The HTH lacI-type domain maps to 2 to 55; it reads SLKAIATTLGISVTTVSRALGGFSDVAASTRERVEAEARRRGYRPNTQARRLKT. Residues 3–22 constitute a DNA-binding region (H-T-H motif); the sequence is LKAIATTLGISVTTVSRALG.

Homodimer.

In terms of biological role, repressor that negatively controls the expression of the raffinose (raf) operon by binding to the raf operator (rafO) DNA. Acts by binding to two operator sites, O1 and 02, which flank the -35 raf promoter box. RafR bound to 02 alone results in 45 % repression of transcription, whereas RafR bound to O1 leads to only 6% repression. The polypeptide is HTH-type transcriptional regulator RafR (Escherichia coli).